We begin with the raw amino-acid sequence, 171 residues long: Co-chaperone protein HscB homolog (171 aa).

The 73-residue stretch at 2–74 folds into the J domain; sequence NYFELFGLPI…LRRAEYLLSL (73 aa).

It belongs to the HscB family. Interacts with HscA and stimulates its ATPase activity.

In terms of biological role, co-chaperone involved in the maturation of iron-sulfur cluster-containing proteins. Seems to help targeting proteins to be folded toward HscA. This chain is Co-chaperone protein HscB homolog, found in Vibrio cholerae serotype O1 (strain M66-2).